An 87-amino-acid polypeptide reads, in one-letter code: Conotoxin Ca6.2 (87 aa).

The first 19 residues, 1–19, serve as a signal peptide directing secretion; it reads MHTLEMLLLVLLLVPLAPG. The propeptide occupies 20-52; sequence EGDGQAVGGDRNPSEARRAYKRLLQRPARRMDR. Cystine bridges form between Cys55-Cys64, Cys58-Cys70, and Cys63-Cys84.

Belongs to the conotoxin Q superfamily. Expressed by the venom duct.

Its subcellular location is the secreted. The chain is Conotoxin Ca6.2 from Conus caracteristicus (Characteristic cone).